The following is a 246-amino-acid chain: Acetoacetyl-CoA reductase (246 aa).

NADP(+)-binding positions include 12-14 (GGI) and 88-92 (CAGIT). Residues aspartate 94 and 147–150 (QFGQ) each bind substrate. Residue tyrosine 153 is the Proton acceptor of the active site. Residue 183–186 (PGYV) participates in NADP(+) binding. A substrate-binding site is contributed by 184 to 185 (GY).

This sequence belongs to the short-chain dehydrogenases/reductases (SDR) family.

It localises to the cytoplasm. The enzyme catalyses a (3R)-3-hydroxyacyl-CoA + NADP(+) = a 3-oxoacyl-CoA + NADPH + H(+). It functions in the pathway biopolymer metabolism; poly-(R)-3-hydroxybutanoate biosynthesis. The chain is Acetoacetyl-CoA reductase from Allochromatium vinosum (strain ATCC 17899 / DSM 180 / NBRC 103801 / NCIMB 10441 / D) (Chromatium vinosum).